Consider the following 221-residue polypeptide: Phosphoribosylformylglycinamidine synthase subunit PurQ (221 aa).

Residues 2–221 (NVGVIVFPGS…FAGLLEPVAA (220 aa)) enclose the Glutamine amidotransferase type-1 domain. C86 functions as the Nucleophile in the catalytic mechanism. Active-site residues include H194 and E196.

In terms of assembly, part of the FGAM synthase complex composed of 1 PurL, 1 PurQ and 2 PurS subunits.

Its subcellular location is the cytoplasm. It catalyses the reaction N(2)-formyl-N(1)-(5-phospho-beta-D-ribosyl)glycinamide + L-glutamine + ATP + H2O = 2-formamido-N(1)-(5-O-phospho-beta-D-ribosyl)acetamidine + L-glutamate + ADP + phosphate + H(+). It carries out the reaction L-glutamine + H2O = L-glutamate + NH4(+). It functions in the pathway purine metabolism; IMP biosynthesis via de novo pathway; 5-amino-1-(5-phospho-D-ribosyl)imidazole from N(2)-formyl-N(1)-(5-phospho-D-ribosyl)glycinamide: step 1/2. Its function is as follows. Part of the phosphoribosylformylglycinamidine synthase complex involved in the purines biosynthetic pathway. Catalyzes the ATP-dependent conversion of formylglycinamide ribonucleotide (FGAR) and glutamine to yield formylglycinamidine ribonucleotide (FGAM) and glutamate. The FGAM synthase complex is composed of three subunits. PurQ produces an ammonia molecule by converting glutamine to glutamate. PurL transfers the ammonia molecule to FGAR to form FGAM in an ATP-dependent manner. PurS interacts with PurQ and PurL and is thought to assist in the transfer of the ammonia molecule from PurQ to PurL. This is Phosphoribosylformylglycinamidine synthase subunit PurQ from Synechococcus sp. (strain ATCC 27144 / PCC 6301 / SAUG 1402/1) (Anacystis nidulans).